We begin with the raw amino-acid sequence, 201 residues long: Dephospho-CoA kinase (201 aa).

The region spanning 10–201 is the DPCK domain; it reads LIGLTGGIAT…PQIIKAWHHR (192 aa). ATP is bound at residue 18 to 23; that stretch reads ATGKST.

It belongs to the CoaE family.

The protein localises to the cytoplasm. The catalysed reaction is 3'-dephospho-CoA + ATP = ADP + CoA + H(+). The protein operates within cofactor biosynthesis; coenzyme A biosynthesis; CoA from (R)-pantothenate: step 5/5. Functionally, catalyzes the phosphorylation of the 3'-hydroxyl group of dephosphocoenzyme A to form coenzyme A. This chain is Dephospho-CoA kinase, found in Synechocystis sp. (strain ATCC 27184 / PCC 6803 / Kazusa).